Reading from the N-terminus, the 635-residue chain is Probable extracellular metalloproteinase 1 (635 aa).

Positions 1 to 19 (MHGLLLAAGLLSLPLHVLA) are cleaved as a signal peptide. A propeptide spanning residues 20–246 (HPQPSTSTSL…VHNVVDYVAH (227 aa)) is cleaved from the precursor. Asparagine 287 carries N-linked (GlcNAc...) asparagine glycosylation. Histidine 430 provides a ligand contact to Zn(2+). Glutamate 431 is an active-site residue. Histidine 434 is a Zn(2+) binding site. N-linked (GlcNAc...) asparagine glycans are attached at residues asparagine 475, asparagine 594, and asparagine 623.

Belongs to the peptidase M36 family. Requires Zn(2+) as cofactor.

The protein localises to the secreted. Functionally, secreted metalloproteinase probably acting as a virulence factor. The sequence is that of Probable extracellular metalloproteinase 1 (MEP1) from Trichophyton verrucosum (strain HKI 0517).